Consider the following 273-residue polypeptide: NAD kinase (273 aa).

Residue Asp-53 is the Proton acceptor of the active site. NAD(+) is bound by residues 53–54, Arg-58, 128–129, Asp-157, 168–173, and Ala-192; these read DG, NE, and TAYNFS.

Belongs to the NAD kinase family. The cofactor is a divalent metal cation.

The protein localises to the cytoplasm. It catalyses the reaction NAD(+) + ATP = ADP + NADP(+) + H(+). In terms of biological role, involved in the regulation of the intracellular balance of NAD and NADP, and is a key enzyme in the biosynthesis of NADP. Catalyzes specifically the phosphorylation on 2'-hydroxyl of the adenosine moiety of NAD to yield NADP. This is NAD kinase from Finegoldia magna (strain ATCC 29328 / DSM 20472 / WAL 2508) (Peptostreptococcus magnus).